Consider the following 268-residue polypeptide: Hydroxyethylthiazole kinase (268 aa).

Methionine 45 contacts substrate. ATP-binding residues include arginine 121 and threonine 167. Residue glycine 194 coordinates substrate.

The protein belongs to the Thz kinase family. Mg(2+) is required as a cofactor.

The enzyme catalyses 5-(2-hydroxyethyl)-4-methylthiazole + ATP = 4-methyl-5-(2-phosphooxyethyl)-thiazole + ADP + H(+). The protein operates within cofactor biosynthesis; thiamine diphosphate biosynthesis; 4-methyl-5-(2-phosphoethyl)-thiazole from 5-(2-hydroxyethyl)-4-methylthiazole: step 1/1. Functionally, catalyzes the phosphorylation of the hydroxyl group of 4-methyl-5-beta-hydroxyethylthiazole (THZ). The polypeptide is Hydroxyethylthiazole kinase (Bacillus cereus (strain ATCC 10987 / NRS 248)).